Consider the following 226-residue polypeptide: Glycerol-3-phosphate acyltransferase (226 aa).

The next 6 helical transmembrane spans lie at 1–21 (MGLW…LGSF), 56–76 (GPGA…IALV), 102–122 (LVTL…FLGF), 134–154 (ILLA…AVVV), 159–178 (IVSL…MVVL), and 182–197 (LPYI…YVIL).

The protein belongs to the PlsY family. Probably interacts with PlsX.

Its subcellular location is the cell inner membrane. It carries out the reaction an acyl phosphate + sn-glycerol 3-phosphate = a 1-acyl-sn-glycero-3-phosphate + phosphate. It participates in lipid metabolism; phospholipid metabolism. Functionally, catalyzes the transfer of an acyl group from acyl-phosphate (acyl-PO(4)) to glycerol-3-phosphate (G3P) to form lysophosphatidic acid (LPA). This enzyme utilizes acyl-phosphate as fatty acyl donor, but not acyl-CoA or acyl-ACP. The sequence is that of Glycerol-3-phosphate acyltransferase from Trichormus variabilis (strain ATCC 29413 / PCC 7937) (Anabaena variabilis).